The chain runs to 346 residues: Phosphoribosylformylglycinamidine cyclo-ligase (346 aa).

Belongs to the AIR synthase family.

It localises to the cytoplasm. The enzyme catalyses 2-formamido-N(1)-(5-O-phospho-beta-D-ribosyl)acetamidine + ATP = 5-amino-1-(5-phospho-beta-D-ribosyl)imidazole + ADP + phosphate + H(+). Its pathway is purine metabolism; IMP biosynthesis via de novo pathway; 5-amino-1-(5-phospho-D-ribosyl)imidazole from N(2)-formyl-N(1)-(5-phospho-D-ribosyl)glycinamide: step 2/2. The chain is Phosphoribosylformylglycinamidine cyclo-ligase from Prochlorococcus marinus (strain NATL2A).